The sequence spans 464 residues: GDNF family receptor alpha-2 (464 aa).

Residues 1–21 form the signal peptide; it reads MILANVFCLFFFLDETLRSLA. Intrachain disulfides connect C40-C93, C95-C105, C161-C222, C168-C174, C185-C200, C195-C241, C224-C229, C251-C323, C258-C264, C275-C293, and C285-C347. N52 carries N-linked (GlcNAc...) asparagine glycosylation. N357 is a glycosylation site (N-linked (GlcNAc...) asparagine). The disordered stretch occupies residues 363–392; that stretch reads VSPKGPSFQATQAPRVEKTPSLPDDLSDST. Residues 381–392 show a composition bias toward low complexity; the sequence is TPSLPDDLSDST. The N-linked (GlcNAc...) asparagine glycan is linked to N413. S444 carries the GPI-anchor amidated serine lipid modification. A propeptide spans 445-464 (removed in mature form); the sequence is RARPSAALTVLSVLMLKLAL.

This sequence belongs to the GDNFR family. Interacts with NRTN ligand and RET: forms a 2:2:2 ternary complex composed of NRTN ligand, GFRA2 and RET receptor. Also forms a 4:4:4 tetrameric complex composed of 4 copies of NRTN ligand, GFRA2 and RET receptor, which prevents endocytosis of RET. Interacts with SORL1. In terms of tissue distribution, found in both brain and placenta.

Its subcellular location is the cell membrane. Receptor for neurturin (NRTN), a growth factor that supports the survival of sympathetic neurons. NRTN-binding leads to autophosphorylation and activation of the RET receptor. Also able to mediate GDNF signaling through the RET tyrosine kinase receptor. Its function is as follows. Participates in NRTN-induced 'Ser-727' phosphorylation of STAT3. This Homo sapiens (Human) protein is GDNF family receptor alpha-2 (GFRA2).